An 89-amino-acid polypeptide reads, in one-letter code: Small ribosomal subunit protein uS15 (89 aa).

This sequence belongs to the universal ribosomal protein uS15 family. In terms of assembly, part of the 30S ribosomal subunit. Forms a bridge to the 50S subunit in the 70S ribosome, contacting the 23S rRNA.

Functionally, one of the primary rRNA binding proteins, it binds directly to 16S rRNA where it helps nucleate assembly of the platform of the 30S subunit by binding and bridging several RNA helices of the 16S rRNA. Forms an intersubunit bridge (bridge B4) with the 23S rRNA of the 50S subunit in the ribosome. The sequence is that of Small ribosomal subunit protein uS15 from Pseudarthrobacter chlorophenolicus (strain ATCC 700700 / DSM 12829 / CIP 107037 / JCM 12360 / KCTC 9906 / NCIMB 13794 / A6) (Arthrobacter chlorophenolicus).